The sequence spans 104 residues: Glutaredoxin-C15 (104 aa).

The Glutaredoxin domain maps to 1–103 (MERVAKLSTE…PMLKAAGAIW (103 aa)). Cys-21 and Cys-24 form a disulfide bridge.

It belongs to the glutaredoxin family. CC-type subfamily.

It localises to the cytoplasm. In terms of biological role, has a glutathione-disulfide oxidoreductase activity in the presence of NADPH and glutathione reductase. Reduces low molecular weight disulfides and proteins. The sequence is that of Glutaredoxin-C15 (GRXC15) from Oryza sativa subsp. japonica (Rice).